A 381-amino-acid chain; its full sequence is Creatine kinase M-type (381 aa).

The Phosphagen kinase N-terminal domain occupies 11 to 98 (KLNYKPEEEY…FDPIIQDRHG (88 aa)). Residues 125–367 (YVLSSRVRTG…KLMVEMEKKL (243 aa)) enclose the Phosphagen kinase C-terminal domain. 128-132 (SSRVR) is an ATP binding site. Ser-164 carries the post-translational modification Phosphoserine. Thr-166 carries the post-translational modification Phosphothreonine. Ser-178 is modified (phosphoserine). The residue at position 180 (Thr-180) is a Phosphothreonine. His-191 contacts ATP. Ser-199 carries the phosphoserine modification. Residues Arg-236 and Arg-292 each contribute to the ATP site. Phosphothreonine is present on residues Thr-313 and Thr-322. ATP contacts are provided by residues 320-325 (RGTGGV) and Asp-335. Residue Ser-372 is modified to Phosphoserine.

The protein belongs to the ATP:guanido phosphotransferase family. As to quaternary structure, dimer of identical or non-identical chains, which can be either B (brain type) or M (muscle type). With MM being the major form in skeletal muscle and myocardium, MB existing in myocardium, and BB existing in many tissues, especially brain.

The protein localises to the cytoplasm. It carries out the reaction creatine + ATP = N-phosphocreatine + ADP + H(+). Reversibly catalyzes the transfer of phosphate between ATP and various phosphogens (e.g. creatine phosphate). Creatine kinase isoenzymes play a central role in energy transduction in tissues with large, fluctuating energy demands, such as skeletal muscle, heart, brain and spermatozoa. This is Creatine kinase M-type (CKM) from Canis lupus familiaris (Dog).